The sequence spans 553 residues: MAAVSLRLGDLVWGKLGRYPPWPGKIVNPPKDLKKPRGKKCFFVKFFGTEDHAWIKVEQLKPYHAHKEEMIKINKGKRFQQAVDAVEEFLRRAKGKDQTSSHSSADDKNRRNSSEERSRPISGDEKRKLSLSEGKVKKNMGEGKKRVPSGSSERGSKSPLKRAQEQSPRKRGRPPKDEKDLSIPESSTVKGMMAGPMATFKWQPNVSEPVKDADPHFHHFLLSQTEKPAVCYQAITKKLKICEEETGSTSIQAADSTAVNGSVTPTDKKIGFLGLGLMGSGIVSNLLKMGHTVTVWNRTAEKCDLFIQEGARLGRTPAEVVSTCDITFACVSDPKAAKDLVLGPSGVLQGIRPGKCYVDMSTVDADTVTELAQVIVSRGGRFLEAPVSGNQQLSNDGMLVILAAGDRGLYEDCSSCFQAMGKTSFFLGEVGNAAKMMLIVNMVQGSFMATIAEGLTLAQVTGQSQQTLLDILNQGQLASIFLDQKCQNILQGNFKPDFYLKYIQKDLRLAIALGDAVNHPTPMAAAANEVYKRAKALDQSDNDMSAVYRAYIH.

A PWWP domain is found at 8 to 66 (LGDLVWGKLGRYPPWPGKIVNPPKDLKKPRGKKCFFVKFFGTEDHAWIKVEQLKPYHAH). Basic and acidic residues-rich tracts occupy residues 92 to 145 (RAKG…EGKK) and 162 to 182 (RAQE…KDLS). The disordered stretch occupies residues 92–190 (RAKGKDQTSS…LSIPESSTVK (99 aa)). Ser-130 carries the post-translational modification Phosphoserine. Residue Lys-135 forms a Glycyl lysine isopeptide (Lys-Gly) (interchain with G-Cter in SUMO2) linkage. Ser-167 bears the Phosphoserine mark. A DNA-binding region (a.T hook) is located at residues 168–180 (PRKRGRPPKDEKD). Glycyl lysine isopeptide (Lys-Gly) (interchain with G-Cter in SUMO2) cross-links involve residues Lys-176, Lys-179, Lys-201, and Lys-211. Positions 214 to 217 (DPHF) are interaction with histone H3. The tract at residues 216-225 (HFHHFLLSQT) is interaction with KDM1B. Residues Lys-227, Lys-237, Lys-240, and Lys-269 each participate in a glycyl lysine isopeptide (Lys-Gly) (interchain with G-Cter in SUMO2) cross-link. A dehydrogenase domain region spans residues 261-553 (GSVTPTDKKI…MSAVYRAYIH (293 aa)). Residue 271 to 285 (GFLGLGLMGSGIVSN) participates in NAD(+) binding. Residue Lys-302 forms a Glycyl lysine isopeptide (Lys-Gly) (interchain with G-Cter in SUMO2) linkage. NAD(+) contacts are provided by Thr-362 and Lys-505. Residue Ser-540 is modified to Phosphoserine.

It belongs to the HIBADH-related family. NP60 subfamily. In terms of assembly, homotetramere. Interacts with MAPK14. Interacts with KDM1B at nucleosomes; this interaction stimulates H3K4me1 and H3K4me2 demethylation. Binds to mononucleosomes. Interacts with GATA4; the interaction is required for a synergistic activation of GATA4 target genes transcription.

The protein resides in the nucleus. It is found in the chromosome. Cytokine-like nuclear factor with chromatin gene reader activity involved in chromatin modification and regulation of gene expression. Acts as a nucleosome-destabilizing factor that is recruited to genes during transcriptional activation. Recognizes and binds histone H3 without a preference for specific epigenetic markers and also binds DNA. Interacts with KDM1B and promotes its histone demethylase activity by facilitating the capture of H3 tails, they form a multifunctional enzyme complex that modifies transcribed chromatin and facilitates Pol II transcription through nucleosomes. Stimulates the acetylation of 'Lys-56' of nucleosomal histone H3 (H3K56ac) by EP300. With GATA4, co-binds a defined set of heart development genes and coregulates their expression during cardiomyocyte differentiation. Regulates p38 MAP kinase activity by mediating stress activation of MAPK14/p38alpha and specifically regulating MAPK14 signaling. Indirectly promotes phosphorylation of MAPK14 and activation of ATF2. The phosphorylation of MAPK14 requires upstream activity of MAP2K4 and MAP2K6. This chain is Cytokine-like nuclear factor N-PAC (GLYR1), found in Bos taurus (Bovine).